The sequence spans 621 residues: 1-deoxy-D-xylulose-5-phosphate synthase (621 aa).

Residues His80 and 121 to 123 each bind thiamine diphosphate; that span reads GHS. Position 152 (Asp152) interacts with Mg(2+). Thiamine diphosphate-binding positions include 153-154, Asn181, Tyr288, and Glu370; that span reads GA. Position 181 (Asn181) interacts with Mg(2+).

The protein belongs to the transketolase family. DXPS subfamily. In terms of assembly, homodimer. Requires Mg(2+) as cofactor. It depends on thiamine diphosphate as a cofactor.

It catalyses the reaction D-glyceraldehyde 3-phosphate + pyruvate + H(+) = 1-deoxy-D-xylulose 5-phosphate + CO2. It functions in the pathway metabolic intermediate biosynthesis; 1-deoxy-D-xylulose 5-phosphate biosynthesis; 1-deoxy-D-xylulose 5-phosphate from D-glyceraldehyde 3-phosphate and pyruvate: step 1/1. Functionally, catalyzes the acyloin condensation reaction between C atoms 2 and 3 of pyruvate and glyceraldehyde 3-phosphate to yield 1-deoxy-D-xylulose-5-phosphate (DXP). The sequence is that of 1-deoxy-D-xylulose-5-phosphate synthase from Edwardsiella ictaluri (strain 93-146).